Reading from the N-terminus, the 125-residue chain is Fluoride-specific ion channel FluC (125 aa).

Transmembrane regions (helical) follow at residues 36 to 56, 65 to 85, and 99 to 119; these read GTIF…FLSI, FILF…TFAY, and IIYF…GMFL. Na(+) is bound by residues Gly75 and Thr78.

Belongs to the fluoride channel Fluc/FEX (TC 1.A.43) family.

The protein resides in the cell inner membrane. The enzyme catalyses fluoride(in) = fluoride(out). Na(+) is not transported, but it plays an essential structural role and its presence is essential for fluoride channel function. Fluoride-specific ion channel. Important for reducing fluoride concentration in the cell, thus reducing its toxicity. This Thermosipho africanus (strain TCF52B) protein is Fluoride-specific ion channel FluC.